A 266-amino-acid polypeptide reads, in one-letter code: Phosphate import ATP-binding protein PstB (266 aa).

The 247-residue stretch at 15–261 (VQKSVVNKLN…PKNKQTEDYI (247 aa)) folds into the ABC transporter domain. 50–57 (GPSGCGKS) lines the ATP pocket.

Belongs to the ABC transporter superfamily. Phosphate importer (TC 3.A.1.7) family. The complex is composed of two ATP-binding proteins (PstB), two transmembrane proteins (PstC and PstA) and a solute-binding protein (PstS).

It localises to the cell inner membrane. The catalysed reaction is phosphate(out) + ATP + H2O = ADP + 2 phosphate(in) + H(+). Its function is as follows. Part of the ABC transporter complex PstSACB involved in phosphate import. Responsible for energy coupling to the transport system. The sequence is that of Phosphate import ATP-binding protein PstB from Nitrosomonas europaea (strain ATCC 19718 / CIP 103999 / KCTC 2705 / NBRC 14298).